We begin with the raw amino-acid sequence, 152 residues long: Small ribosomal subunit protein uS8m (152 aa).

The protein belongs to the universal ribosomal protein uS8 family. Component of the mitochondrial small ribosomal subunit (mt-SSU). Mature yeast 74S mitochondrial ribosomes consist of a small (37S) and a large (54S) subunit. The 37S small subunit contains a 15S ribosomal RNA (15S mt-rRNA) and at least 32 different proteins. The 54S large subunit contains a 21S rRNA (21S mt-rRNA) and at least 45 different proteins.

It localises to the mitochondrion. Its function is as follows. Component of the mitochondrial ribosome (mitoribosome), a dedicated translation machinery responsible for the synthesis of mitochondrial genome-encoded proteins, including at least some of the essential transmembrane subunits of the mitochondrial respiratory chain. The mitoribosomes are attached to the mitochondrial inner membrane and translation products are cotranslationally integrated into the membrane. The polypeptide is Small ribosomal subunit protein uS8m (mrps8) (Schizosaccharomyces pombe (strain 972 / ATCC 24843) (Fission yeast)).